The chain runs to 162 residues: Peroxiredoxin-2D (162 aa).

The region spanning 4–162 (ITVGDVVPDG…SSAEDILKAL (159 aa)) is the Thioredoxin domain. Cysteine 51 serves as the catalytic Cysteine sulfenic acid (-SOH) intermediate.

The protein belongs to the peroxiredoxin family. Prx5 subfamily. In terms of assembly, monomer. As to expression, exclusively expressed in buds and flowers. Also detected in pollen.

The protein localises to the cytoplasm. The enzyme catalyses [glutaredoxin]-dithiol + a hydroperoxide = [glutaredoxin]-disulfide + an alcohol + H2O. Thiol-specific peroxidase that catalyzes the reduction of hydrogen peroxide and organic hydroperoxides to water and alcohols, respectively. Plays a role in cell protection against oxidative stress by detoxifying peroxides. May be involved in intracellular redox signaling. This chain is Peroxiredoxin-2D (PRXIID), found in Arabidopsis thaliana (Mouse-ear cress).